The following is a 168-amino-acid chain: ATP synthase subunit b (168 aa).

The helical transmembrane segment at 9–29 (AIPFGTIAYTLFIFLLLLVML) threads the bilayer.

Belongs to the ATPase B chain family. In terms of assembly, F-type ATPases have 2 components, F(1) - the catalytic core - and F(0) - the membrane proton channel. F(1) has five subunits: alpha(3), beta(3), gamma(1), delta(1), epsilon(1). F(0) has three main subunits: a(1), b(2) and c(10-14). The alpha and beta chains form an alternating ring which encloses part of the gamma chain. F(1) is attached to F(0) by a central stalk formed by the gamma and epsilon chains, while a peripheral stalk is formed by the delta and b chains.

It is found in the cell membrane. Its function is as follows. F(1)F(0) ATP synthase produces ATP from ADP in the presence of a proton or sodium gradient. F-type ATPases consist of two structural domains, F(1) containing the extramembraneous catalytic core and F(0) containing the membrane proton channel, linked together by a central stalk and a peripheral stalk. During catalysis, ATP synthesis in the catalytic domain of F(1) is coupled via a rotary mechanism of the central stalk subunits to proton translocation. Functionally, component of the F(0) channel, it forms part of the peripheral stalk, linking F(1) to F(0). The protein is ATP synthase subunit b of Bacillus cereus (strain ATCC 10987 / NRS 248).